The chain runs to 928 residues: Tyrosine-protein phosphatase 3 (928 aa).

T75 is subject to Phosphothreonine. The region spanning 111 to 232 (PDEKVLLLDV…FKILFPDHIN (122 aa)) is the Rhodanese domain. The interval 247–307 (KSPKTNLMNS…PRNVLSDSPM (61 aa)) is disordered. S248 is modified (phosphoserine). Composition is skewed to polar residues over residues 249-259 (PKTNLMNSLHN) and 265-275 (TATTPLSSPQM). Residues 280-289 (KVPDDSRSDH) are compositionally biased toward basic and acidic residues. Low complexity predominate over residues 290–307 (SNFSSSPSPRNVLSDSPM). Phosphoserine is present on residues S297 and S368. Disordered regions lie at residues 467 to 487 (LTST…NKVQ) and 672 to 713 (MRKN…NNNN). Residues 502 to 878 (YKSMLSLESD…IFIYDCLLFY (377 aa)) enclose the Tyrosine-protein phosphatase domain. Residues 672 to 691 (MRKNTMGTQNSSLYSAGVQG) are compositionally biased toward polar residues. Positions 692-713 (NSSNYSTDNDNDNDNNNNNNNN) are enriched in low complexity. C804 serves as the catalytic Phosphocysteine intermediate.

Belongs to the protein-tyrosine phosphatase family. Non-receptor class subfamily. Interacts with HOG1.

Its subcellular location is the cytoplasm. The enzyme catalyses O-phospho-L-tyrosyl-[protein] + H2O = L-tyrosyl-[protein] + phosphate. Its function is as follows. Major phosphatase responsible for tyrosine dephosphorylation of MAP kinases FUS3 and HOG1 to inactivate their activity; it also has important roles, along with MSG5, in the inactivation of FUS3 following pheromone stimulation. The chain is Tyrosine-protein phosphatase 3 (PTP3) from Saccharomyces cerevisiae (strain ATCC 204508 / S288c) (Baker's yeast).